Reading from the N-terminus, the 521-residue chain is Na(+)/H(+) antiporter ApNhaP (521 aa).

Topologically, residues 1 to 18 (MTIEAAMGEEAIKENLEQ) are periplasmic. A helical membrane pass occupies residues 19–39 (FLIVLSVSLGVATLSQISSFF). Residues 40–41 (RQ) lie on the Cytoplasmic side of the membrane. The helical transmembrane segment at 42 to 62 (IPYTLLLVIVGLGLAFVDIRL) threads the bilayer. Topologically, residues 63–94 (VNLSPELILEIFLPPLLFEAAWNIRWRNLKKN) are periplasmic. Residues 95–115 (LFPVVLLAIIGVVISVVGIGF) traverse the membrane as a helical segment. Over 116-126 (SLNYFSGLSLP) the chain is Cytoplasmic. Residues 127–147 (IALLVGAILAATDPVSVIALF) form a helical membrane-spanning segment. Residues 148–164 (RELGVGERLTVLMEGES) are Periplasmic-facing. A helical transmembrane segment spans residues 165–185 (LFNDGVAVVAFSLLVGIPLGT). Residues 186–194 (QEFSVTNTL) lie on the Cytoplasmic side of the membrane. Residues 195-215 (IQFVTLQGIGIGCGGVIGFGI) traverse the membrane as a helical segment. Over 216–245 (SYLTQRFDLPLVEQSLTLVSAYGTYLITEE) the chain is Periplasmic. Residues 246–266 (LGGSGVIGVVTVGLILGNFGS) traverse the membrane as a helical segment. Residues 267–276 (RIGMNPRTRL) lie on the Cytoplasmic side of the membrane. Residues 277-297 (LVSEFWEFIAFFVNSIVFLLI) traverse the membrane as a helical segment. Topologically, residues 298-311 (GDQINIRGLADNGQ) are periplasmic. Residues 312-332 (LILITIIALVIIRAISIYGLG) traverse the membrane as a helical segment. At 333–349 (TISNLITKQDISWQEET) the chain is on the cytoplasmic side. A helical transmembrane segment spans residues 350 to 370 (VLWWGGLRGSVSIALALSVPV). At 371–380 (MLDGRQDIIE) the chain is on the periplasmic side. The chain crosses the membrane as a helical span at residues 381-401 (AVFGVVLFTLLVQGLTMQTVI). At 402–521 (EKLGLIGDRA…LLQEVLAKPE (120 aa)) the chain is on the cytoplasmic side.

It belongs to the monovalent cation:proton antiporter 1 (CPA1) transporter (TC 2.A.36) family.

It is found in the cell inner membrane. In terms of biological role, na(+)/H(+) antiporter that extrudes sodium in exchange for external protons. Also shows high Ca(2+)/H(+) antiporter activity at alkaline pH. Does not catalyze exchange between Li(+) and H(+). The polypeptide is Na(+)/H(+) antiporter ApNhaP (apnhaP) (Aphanothece halophytica).